Reading from the N-terminus, the 457-residue chain is MALWGGRFTQAADGRFKQFNDSLRFDYRLAEQDIIGSVAWSKALVTVGVLTAQEQSQLEGALNTLLEEVLENPHAILESDAEDIHSWVEGKLIDKVGPLGKKLHTGRSRNDQVATDLKLWCKTQVHALLSATRQLQQALVVTAEENQDAVMPGYTHLQRAQPVTFAHWCLAYVEMLARDESRLKDTLKRLDVSPLGSGALAGTAYEIDREQLAGWLGFASATRNSLDSVSDRDHVLELLSDAAISMVHLSRFAEDLIFFNSGEAGFVELSDRVTSGSSLMPQKKNPDALELIRGKCGRVQGALTGMMMTLKGLPLAYNKDMQEDKEGLFDALDTWLDCLHMAALVLDGIQVKRPRCQEAAQQGYANATELADYLVAKGVPFREAHHIVGEAVVEAIRQGKPLEDLALGDLQKFSPVISDDVYPVLSLQSCLDKRAAQGGVSPVQVAQAISAAKARLA.

The protein belongs to the lyase 1 family. Argininosuccinate lyase subfamily.

Its subcellular location is the cytoplasm. It carries out the reaction 2-(N(omega)-L-arginino)succinate = fumarate + L-arginine. It functions in the pathway amino-acid biosynthesis; L-arginine biosynthesis; L-arginine from L-ornithine and carbamoyl phosphate: step 3/3. The sequence is that of Argininosuccinate lyase from Cronobacter sakazakii (strain ATCC BAA-894) (Enterobacter sakazakii).